The following is a 1004-amino-acid chain: Outer cell wall protein (1004 aa).

The first 24 residues, 1 to 24, serve as a signal peptide directing secretion; sequence MNKKVVLSVLSTTLVASVAASAFA.

As to quaternary structure, the outer cell wall layer is composed of subunits of the outer cell wall protein. These proteins form a hexagonal array with a lattice constant of 14.5 nm in the outer cell wall layers.

The protein localises to the secreted. Its subcellular location is the cell wall. It localises to the S-layer. Functionally, the outer wall protein binds to the middle cell wall protein. The polypeptide is Outer cell wall protein (Brevibacillus brevis (strain 47 / JCM 6285 / NBRC 100599)).